A 122-amino-acid chain; its full sequence is Large ribosomal subunit protein uL14 (122 aa).

It belongs to the universal ribosomal protein uL14 family. As to quaternary structure, part of the 50S ribosomal subunit. Forms a cluster with proteins L3 and L19. In the 70S ribosome, L14 and L19 interact and together make contacts with the 16S rRNA in bridges B5 and B8.

Its function is as follows. Binds to 23S rRNA. Forms part of two intersubunit bridges in the 70S ribosome. The protein is Large ribosomal subunit protein uL14 of Acidothermus cellulolyticus (strain ATCC 43068 / DSM 8971 / 11B).